We begin with the raw amino-acid sequence, 218 residues long: N-(5'-phosphoribosyl)anthranilate isomerase (218 aa).

Belongs to the TrpF family.

The enzyme catalyses N-(5-phospho-beta-D-ribosyl)anthranilate = 1-(2-carboxyphenylamino)-1-deoxy-D-ribulose 5-phosphate. Its pathway is amino-acid biosynthesis; L-tryptophan biosynthesis; L-tryptophan from chorismate: step 3/5. In Rhodopseudomonas palustris (strain BisA53), this protein is N-(5'-phosphoribosyl)anthranilate isomerase.